Consider the following 297-residue polypeptide: Urease accessory protein UreD 2 (297 aa).

This sequence belongs to the UreD family. As to quaternary structure, ureD, UreF and UreG form a complex that acts as a GTP-hydrolysis-dependent molecular chaperone, activating the urease apoprotein by helping to assemble the nickel containing metallocenter of UreC. The UreE protein probably delivers the nickel.

Its subcellular location is the cytoplasm. Functionally, required for maturation of urease via the functional incorporation of the urease nickel metallocenter. This Methylorubrum populi (strain ATCC BAA-705 / NCIMB 13946 / BJ001) (Methylobacterium populi) protein is Urease accessory protein UreD 2.